Here is a 432-residue protein sequence, read N- to C-terminus: Ribosomal protein uS12 methylthiotransferase RimO (432 aa).

Residues 2–115 (IRVAVITLGC…LPEIINRVLK (114 aa)) enclose the MTTase N-terminal domain. [4Fe-4S] cluster is bound by residues cysteine 11, cysteine 47, cysteine 78, cysteine 151, cysteine 155, and cysteine 158. The region spanning 137-367 (EDGKPFAYLK…MLHQQSITRA (231 aa)) is the Radical SAM core domain.

Belongs to the methylthiotransferase family. RimO subfamily. The cofactor is [4Fe-4S] cluster.

The protein localises to the cytoplasm. The enzyme catalyses L-aspartate(89)-[ribosomal protein uS12]-hydrogen + (sulfur carrier)-SH + AH2 + 2 S-adenosyl-L-methionine = 3-methylsulfanyl-L-aspartate(89)-[ribosomal protein uS12]-hydrogen + (sulfur carrier)-H + 5'-deoxyadenosine + L-methionine + A + S-adenosyl-L-homocysteine + 2 H(+). Catalyzes the methylthiolation of an aspartic acid residue of ribosomal protein uS12. The sequence is that of Ribosomal protein uS12 methylthiotransferase RimO from Moorella thermoacetica (strain ATCC 39073 / JCM 9320).